The chain runs to 475 residues: Ribulose bisphosphate carboxylase large chain (475 aa).

The propeptide occupies 1–2; that stretch reads MS. Position 3 is an N-acetylproline (proline 3). Residue lysine 14 is modified to N6,N6,N6-trimethyllysine. Substrate is bound by residues asparagine 123 and threonine 173. Lysine 175 acts as the Proton acceptor in catalysis. Residue lysine 177 participates in substrate binding. Residues lysine 201, aspartate 203, and glutamate 204 each contribute to the Mg(2+) site. Lysine 201 bears the N6-carboxylysine mark. Histidine 294 acts as the Proton acceptor in catalysis. Positions 295, 327, and 379 each coordinate substrate.

The protein belongs to the RuBisCO large chain family. Type I subfamily. In terms of assembly, heterohexadecamer of 8 large chains and 8 small chains; disulfide-linked. The disulfide link is formed within the large subunit homodimers. The cofactor is Mg(2+). In terms of processing, the disulfide bond which can form in the large chain dimeric partners within the hexadecamer appears to be associated with oxidative stress and protein turnover.

The protein localises to the plastid. The protein resides in the chloroplast. It carries out the reaction 2 (2R)-3-phosphoglycerate + 2 H(+) = D-ribulose 1,5-bisphosphate + CO2 + H2O. It catalyses the reaction D-ribulose 1,5-bisphosphate + O2 = 2-phosphoglycolate + (2R)-3-phosphoglycerate + 2 H(+). Functionally, ruBisCO catalyzes two reactions: the carboxylation of D-ribulose 1,5-bisphosphate, the primary event in carbon dioxide fixation, as well as the oxidative fragmentation of the pentose substrate in the photorespiration process. Both reactions occur simultaneously and in competition at the same active site. This Alnus incana (White alder) protein is Ribulose bisphosphate carboxylase large chain.